The primary structure comprises 195 residues: Phosphoribosylglycinamide formyltransferase (195 aa).

12–14 (GSN) provides a ligand contact to N(1)-(5-phospho-beta-D-ribosyl)glycinamide. (6R)-10-formyltetrahydrofolate is bound by residues K65, 90 to 93 (MRLI), and N107. The active-site Proton donor is the H109.

This sequence belongs to the GART family.

The enzyme catalyses N(1)-(5-phospho-beta-D-ribosyl)glycinamide + (6R)-10-formyltetrahydrofolate = N(2)-formyl-N(1)-(5-phospho-beta-D-ribosyl)glycinamide + (6S)-5,6,7,8-tetrahydrofolate + H(+). It participates in purine metabolism; IMP biosynthesis via de novo pathway; N(2)-formyl-N(1)-(5-phospho-D-ribosyl)glycinamide from N(1)-(5-phospho-D-ribosyl)glycinamide (10-formyl THF route): step 1/1. Its function is as follows. Catalyzes the transfer of a formyl group from 10-formyltetrahydrofolate to 5-phospho-ribosyl-glycinamide (GAR), producing 5-phospho-ribosyl-N-formylglycinamide (FGAR) and tetrahydrofolate. The protein is Phosphoribosylglycinamide formyltransferase of Bacillus subtilis (strain 168).